The following is a 465-amino-acid chain: 3-isopropylmalate dehydratase large subunit (465 aa).

Residues cysteine 346, cysteine 406, and cysteine 409 each contribute to the [4Fe-4S] cluster site.

Belongs to the aconitase/IPM isomerase family. LeuC type 1 subfamily. As to quaternary structure, heterodimer of LeuC and LeuD. The cofactor is [4Fe-4S] cluster.

It carries out the reaction (2R,3S)-3-isopropylmalate = (2S)-2-isopropylmalate. It functions in the pathway amino-acid biosynthesis; L-leucine biosynthesis; L-leucine from 3-methyl-2-oxobutanoate: step 2/4. Its function is as follows. Catalyzes the isomerization between 2-isopropylmalate and 3-isopropylmalate, via the formation of 2-isopropylmaleate. This Psychromonas ingrahamii (strain DSM 17664 / CCUG 51855 / 37) protein is 3-isopropylmalate dehydratase large subunit.